The chain runs to 160 residues: uncharacterized protein (160 aa).

Its subcellular location is the plastid. This is an uncharacterized protein from Euglena longa (Euglenophycean alga).